Consider the following 479-residue polypeptide: Anaerobic nitric oxide reductase flavorubredoxin (479 aa).

The segment at 30-210 (LRGSSYNSYL…PFSRLVTPKI (181 aa)) is zinc metallo-hydrolase. The Fe cation site is built by His79, Glu81, Asp83, His147, Asp166, and His227. A Flavodoxin-like domain is found at 254-393 (ITIFYDTMSN…LCREHGREIA (140 aa)). FMN contacts are provided by residues 260–264 (TMSNN) and 342–369 (AFGS…EMSL). Residues 423-474 (GPRMQCSVCQWIYDPAKGEPMQDVAPGTPWSEVPDNFLCPECSLGKDVFDEL) form the Rubredoxin-like domain. Residues Cys428, Cys431, Cys461, and Cys464 each contribute to the Fe cation site.

This sequence in the N-terminal section; belongs to the zinc metallo-hydrolase group 3 family. In terms of assembly, homotetramer. Fe cation is required as a cofactor. It depends on FMN as a cofactor.

The protein resides in the cytoplasm. It participates in nitrogen metabolism; nitric oxide reduction. Its function is as follows. Anaerobic nitric oxide reductase; uses NADH to detoxify nitric oxide (NO), protecting several 4Fe-4S NO-sensitive enzymes. Has at least 2 reductase partners, only one of which (NorW, flavorubredoxin reductase) has been identified. NO probably binds to the di-iron center; electrons enter from the NorW at rubredoxin and are transferred sequentially to the FMN center and the di-iron center. Also able to function as an aerobic oxygen reductase. The sequence is that of Anaerobic nitric oxide reductase flavorubredoxin from Shigella sonnei (strain Ss046).